The chain runs to 241 residues: Protein unc-119 homolog B-B (241 aa).

A disordered region spans residues 1-46 (MSGSNREAALAGQPKDERKKSGGGVINRLKARRVQGKESGTSDQSS). Tyr132 is a tetradecanoate binding site.

Belongs to the PDE6D/unc-119 family.

The protein resides in the cell projection. It is found in the cilium. In terms of biological role, myristoyl-binding protein that acts as a cargo adapter: specifically binds the myristoyl moiety of a subset of N-terminally myristoylated proteins and is required for their localization. Plays a key role in localization of proteins to the primary cilium membrane. In Xenopus laevis (African clawed frog), this protein is Protein unc-119 homolog B-B (unc119b-b).